The chain runs to 332 residues: Beta-ketoacyl-[acyl-carrier-protein] synthase III 2 (332 aa).

Active-site residues include Cys115 and His252. An ACP-binding region spans residues 253 to 257; sequence SANLR. The active site involves Asn282.

Belongs to the thiolase-like superfamily. FabH family. In terms of assembly, homodimer.

The protein resides in the cytoplasm. The catalysed reaction is malonyl-[ACP] + acetyl-CoA + H(+) = 3-oxobutanoyl-[ACP] + CO2 + CoA. Its pathway is lipid metabolism; fatty acid biosynthesis. In terms of biological role, catalyzes the condensation reaction of fatty acid synthesis by the addition to an acyl acceptor of two carbons from malonyl-ACP. Catalyzes the first condensation reaction which initiates fatty acid synthesis and may therefore play a role in governing the total rate of fatty acid production. Possesses both acetoacetyl-ACP synthase and acetyl transacylase activities. Its substrate specificity determines the biosynthesis of branched-chain and/or straight-chain of fatty acids. This chain is Beta-ketoacyl-[acyl-carrier-protein] synthase III 2, found in Halalkalibacterium halodurans (strain ATCC BAA-125 / DSM 18197 / FERM 7344 / JCM 9153 / C-125) (Bacillus halodurans).